The primary structure comprises 322 residues: DNA primase small subunit PriS (322 aa).

Catalysis depends on residues Asp-86, Asp-88, and Asp-226.

Belongs to the eukaryotic-type primase small subunit family. As to quaternary structure, heterodimer of a small subunit (PriS) and a large subunit (PriL). It depends on Mg(2+) as a cofactor. Mn(2+) is required as a cofactor.

Its function is as follows. Catalytic subunit of DNA primase, an RNA polymerase that catalyzes the synthesis of short RNA molecules used as primers for DNA polymerase during DNA replication. The small subunit contains the primase catalytic core and has DNA synthesis activity on its own. Binding to the large subunit stabilizes and modulates the activity, increasing the rate of DNA synthesis while decreasing the length of the DNA fragments, and conferring RNA synthesis capability. The DNA polymerase activity may enable DNA primase to also catalyze primer extension after primer synthesis. May also play a role in DNA repair. The chain is DNA primase small subunit PriS from Thermoplasma acidophilum (strain ATCC 25905 / DSM 1728 / JCM 9062 / NBRC 15155 / AMRC-C165).